Here is a 155-residue protein sequence, read N- to C-terminus: uncharacterized protein (155 aa).

The N-terminal stretch at 1-19 (MPLSKTLVQKLQQAGMAIA) is a signal peptide.

This is an uncharacterized protein from Haemophilus influenzae (strain ATCC 51907 / DSM 11121 / KW20 / Rd).